The sequence spans 433 residues: MRAEARGGLERFCSAGKGRGLRALRPFHVGDLLFSCPAYACVLTVGERGHHCECCFARKEGLSKCGRCKQAFYCDVECQKEDWPLHKLECSSMVVLGENWNPSETVRLTARILAKQKIHPERTPSEKLLAVREFESHLDKLDNEKKDLIQSDIAALHQFYSKYLEFPDHSSLVVLFAQVNCNGFTIEDEELSHLGSAIFPDVALMNHSCCPNVIVTYKGTLAEVRAVQEIHPGDEVFTSYIDLLYPTEDRNDRLRDSYFFTCECRECTTKDKDKAKVEVRKLSSPPQAEAIRDMVRYARNVIEEFRRAKHYKSPSELLEICELSQEKMSSVFEDSNVYMLHMMYQAMGVCLYMQDWEGALKYGQKIIKPYSKHYPVYSLNVASMWLKLGRLYMGLENKAAGEKALKKAIAIMEVAHGKDHPYISEIKQEIESH.

An SET domain is found at 7 to 241 (GGLERFCSAG…PGDEVFTSYI (235 aa)). An S-adenosyl-L-methionine-binding site is contributed by 17 to 19 (KGR). Zn(2+) is bound by residues cysteine 52, cysteine 55, cysteine 65, cysteine 68, cysteine 74, cysteine 78, histidine 86, and cysteine 90. Residues 52 to 90 (CECCFARKEGLSKCGRCKQAFYCDVECQKEDWPLHKLEC) form an MYND-type zinc finger. S-adenosyl-L-methionine-binding positions include histidine 137, 206-207 (NH), and 258-260 (YFF). A Phosphoserine modification is found at serine 283.

It belongs to the class V-like SAM-binding methyltransferase superfamily. In terms of assembly, interacts (via MYND-type zinc finger) with EPB41L3. Interacts (via SET domain) with p53/TP53. Interacts with RB1 and HSP90AA1. Interacts with RNA polymerase II and HELZ. Interacts with SIN3A and HDAC1. Highly expressed in heart, skeletal muscle and brain tissue. During cardiac development, it is differentially expressed with highest expression in the neonatal heart while very low expression is detected at 12.5 dpc and adult. Specifically expressed in cardiomyocytes (at protein level).

Its subcellular location is the cytoplasm. It localises to the cytosol. The protein resides in the nucleus. It catalyses the reaction L-lysyl(4)-[histone H3] + 3 S-adenosyl-L-methionine = N(6),N(6),N(6)-trimethyl-L-lysyl(4)-[histone H3] + 3 S-adenosyl-L-homocysteine + 3 H(+). It carries out the reaction L-lysyl-[protein] + S-adenosyl-L-methionine = N(6)-methyl-L-lysyl-[protein] + S-adenosyl-L-homocysteine + H(+). Its function is as follows. Protein-lysine N-methyltransferase that methylates both histones and non-histone proteins, including p53/TP53 and RB1. Specifically trimethylates histone H3 'Lys-4' (H3K4me3) in vivo. The activity requires interaction with HSP90alpha. Shows even higher methyltransferase activity on p53/TP53. Monomethylates 'Lys-370' of p53/TP53, leading to decreased DNA-binding activity and subsequent transcriptional regulation activity of p53/TP53. Monomethylates RB1 at 'Lys-860'. This is N-lysine methyltransferase SMYD2 (Smyd2) from Mus musculus (Mouse).